Reading from the N-terminus, the 199-residue chain is Probable NADH dehydrogenase [ubiquinone] iron-sulfur protein 7, mitochondrial (199 aa).

The N-terminal 16 residues, 1-16, are a transit peptide targeting the mitochondrion; that stretch reads MLSALRTAGALSTRRL. Residues Cys74, Cys75, Cys139, and Cys169 each contribute to the [4Fe-4S] cluster site.

The protein belongs to the complex I 20 kDa subunit family. In terms of assembly, complex I is composed of 45 different subunits This is a component of the iron-sulfur (IP) fragment of the enzyme. [4Fe-4S] cluster serves as cofactor.

It localises to the mitochondrion. The enzyme catalyses a ubiquinone + NADH + 5 H(+)(in) = a ubiquinol + NAD(+) + 4 H(+)(out). In terms of biological role, core subunit of the mitochondrial membrane respiratory chain NADH dehydrogenase (Complex I) that is believed to belong to the minimal assembly required for catalysis. Complex I functions in the transfer of electrons from NADH to the respiratory chain. The immediate electron acceptor for the enzyme is believed to be ubiquinone. The sequence is that of Probable NADH dehydrogenase [ubiquinone] iron-sulfur protein 7, mitochondrial from Caenorhabditis briggsae.